We begin with the raw amino-acid sequence, 259 residues long: Glucosamine-6-phosphate deaminase (259 aa).

Asp66 (proton acceptor; for enolization step) is an active-site residue. The active-site For ring-opening step is the Asp135. His137 functions as the Proton acceptor; for ring-opening step in the catalytic mechanism. The For ring-opening step role is filled by Glu142.

This sequence belongs to the glucosamine/galactosamine-6-phosphate isomerase family. NagB subfamily.

The enzyme catalyses alpha-D-glucosamine 6-phosphate + H2O = beta-D-fructose 6-phosphate + NH4(+). It participates in amino-sugar metabolism; N-acetylneuraminate degradation; D-fructose 6-phosphate from N-acetylneuraminate: step 5/5. In terms of biological role, catalyzes the reversible isomerization-deamination of glucosamine 6-phosphate (GlcN6P) to form fructose 6-phosphate (Fru6P) and ammonium ion. This is Glucosamine-6-phosphate deaminase from Rhodococcus jostii (strain RHA1).